The primary structure comprises 130 residues: Calcium-binding protein KRP1 (130 aa).

One can recognise an EF-hand domain in the interval 72–107 (LTDEDVRCMIKEGDFDCDGALNQMEFCVLMFRLSPD). Positions 85, 87, 89, and 96 each coordinate Ca(2+).

Its function is as follows. Potential calcium sensor that binds calcium in vitro. This chain is Calcium-binding protein KRP1, found in Arabidopsis thaliana (Mouse-ear cress).